The primary structure comprises 263 residues: Protein PYRICULARIA ORYZAE RESISTANCE 21 (263 aa).

The HMA domain occupies 1–68 (MGILVISVDL…IWCKAGKIIK (68 aa)). Positions 12 and 15 each coordinate a metal cation. The disordered stretch occupies residues 126–153 (CEKPKPCEKPPPCKPEEPPKPPPEKPPP). Residues 139-153 (KPEEPPKPPPEKPPP) show a composition bias toward basic and acidic residues.

Its function is as follows. Involved in defense responses. Contributes to slowing defense responses toward Magnaporthe oryzae. This is Protein PYRICULARIA ORYZAE RESISTANCE 21 from Oryza sativa subsp. indica (Rice).